The sequence spans 835 residues: Protein translocase subunit SecA (835 aa).

Residues Gln-85, 103–107, and Asp-492 each bind ATP; that span reads GEGKT. The tract at residues 788-807 is disordered; the sequence is VQGEAVHPSSDGEEAKKKPV. Zn(2+) is bound by residues Cys-819, Cys-821, Cys-830, and Cys-831.

It belongs to the SecA family. Monomer and homodimer. Part of the essential Sec protein translocation apparatus which comprises SecA, SecYEG and auxiliary proteins SecDF. Other proteins may also be involved. It depends on Zn(2+) as a cofactor.

It localises to the cell membrane. Its subcellular location is the cytoplasm. It carries out the reaction ATP + H2O + cellular proteinSide 1 = ADP + phosphate + cellular proteinSide 2.. Functionally, part of the Sec protein translocase complex. Interacts with the SecYEG preprotein conducting channel. Has a central role in coupling the hydrolysis of ATP to the transfer of proteins into and across the cell membrane, serving as an ATP-driven molecular motor driving the stepwise translocation of polypeptide chains across the membrane. This is Protein translocase subunit SecA from Bacillus cereus (strain ATCC 10987 / NRS 248).